The primary structure comprises 74 residues: Small ribosomal subunit protein bS18 (74 aa).

The protein belongs to the bacterial ribosomal protein bS18 family. As to quaternary structure, part of the 30S ribosomal subunit. Forms a tight heterodimer with protein bS6.

In terms of biological role, binds as a heterodimer with protein bS6 to the central domain of the 16S rRNA, where it helps stabilize the platform of the 30S subunit. The chain is Small ribosomal subunit protein bS18 from Gloeobacter violaceus (strain ATCC 29082 / PCC 7421).